A 497-amino-acid polypeptide reads, in one-letter code: Tyrosine-protein kinase SPK-1 (497 aa).

The disordered stretch occupies residues 1-25 (MGQKFSIKCKKQSKNKNTSKCQKIP). The SH3 domain maps to 33–94 (PGSYMVKAKY…PSNYVSKQDG (62 aa)). The region spanning 100 to 200 (EAWREIQRWE…NTHIPLTDPM (101 aa)) is the SH2 domain. The Protein kinase domain maps to 220–482 (IEILNEIGRG…LVLQEKMDLL (263 aa)). ATP contacts are provided by residues 226–234 (IGRGFFGSV) and K248. The active-site Proton acceptor is D342.

This sequence belongs to the protein kinase superfamily. Tyr protein kinase family.

It carries out the reaction L-tyrosyl-[protein] + ATP = O-phospho-L-tyrosyl-[protein] + ADP + H(+). The protein is Tyrosine-protein kinase SPK-1 of Girardia tigrina (Planarian).